The sequence spans 297 residues: Acetaldehyde dehydrogenase (297 aa).

18-21 (TGNI) provides a ligand contact to NAD(+). Cys-133 acts as the Acyl-thioester intermediate in catalysis. NAD(+)-binding positions include 165–173 (SAGPATRLN) and Asn-275.

The protein belongs to the acetaldehyde dehydrogenase family.

The catalysed reaction is acetaldehyde + NAD(+) + CoA = acetyl-CoA + NADH + H(+). The polypeptide is Acetaldehyde dehydrogenase (Spirochaeta aurantia).